Consider the following 73-residue polypeptide: Conotoxin MaI51 (73 aa).

The signal sequence occupies residues 1–19; the sequence is MQKLTILLLVAAVLLSTQA. The propeptide occupies 20 to 41; it reads LNQEKRPKEMINVLSKGKTNAE. The residue at position 46 (glutamine 46) is a Pyrrolidone carboxylic acid. Disulfide bonds link cysteine 47-cysteine 61, cysteine 54-cysteine 65, and cysteine 60-cysteine 69. Isoleucine 72 is subject to Isoleucine amide.

Belongs to the conotoxin O2 superfamily. Expressed by the venom duct.

The protein localises to the secreted. The polypeptide is Conotoxin MaI51 (Conus marmoreus (Marble cone)).